We begin with the raw amino-acid sequence, 234 residues long: DNA repair protein RecO (234 aa).

Belongs to the RecO family.

Functionally, involved in DNA repair and RecF pathway recombination. This is DNA repair protein RecO from Alteromonas mediterranea (strain DSM 17117 / CIP 110805 / LMG 28347 / Deep ecotype).